The primary structure comprises 2112 residues: Phenolphthiocerol synthesis polyketide synthase type I Pks15/1 (2112 aa).

The Ketosynthase family 3 (KS3) domain occupies threonine 46–glutamate 469. Residues cysteine 216, histidine 351, and histidine 391 each act as for beta-ketoacyl synthase activity in the active site. Residues threonine 579–valine 893 form an acyltransferase region. The For acyltransferase activity role is filled by serine 670. Positions histidine 941–threonine 1063 are N-terminal hotdog fold. Positions histidine 941 to leucine 1101 are dehydratase. The PKS/mFAS DH domain maps to histidine 941 to arginine 1215. The active-site Proton acceptor; for dehydratase activity is the histidine 973. The interval alanine 1075 to arginine 1215 is C-terminal hotdog fold. Aspartate 1136 functions as the Proton donor; for dehydratase activity in the catalytic mechanism. Residues glycine 1406–leucine 1711 are enoylreductase. Residues valine 1536–alanine 1553 and threonine 1725–alanine 1740 each bind NADP(+). A beta-ketoacyl reductase region spans residues glycine 1724–proline 1905. Residues glutamate 2010–methionine 2085 enclose the Carrier domain. Residue serine 2045 is modified to O-(pantetheine 4'-phosphoryl)serine. Residues glutamine 2084–valine 2100 show a composition bias toward polar residues. The segment at glutamine 2084–alanine 2112 is disordered.

Belongs to the thiolase-like superfamily. Beta-ketoacyl-ACP synthases family. The cofactor is pantetheine 4'-phosphate.

The enzyme catalyses a fatty acyl-[ACP] + malonyl-[ACP] + H(+) = a 3-oxoacyl-[ACP] + holo-[ACP] + CO2. It participates in lipid metabolism; fatty acid biosynthesis. In terms of biological role, catalyzes the elongation by iterative transfer of p-hydroxybenzoyl group from FadD22 (pHBA-S-FAdD22) to form p-hydroxyphenylalkanoate (pHPA) intermediates during phenolphthiocerol (PPOL) biosynthesis. PPOL is an important intermediate in the biosynthesis of phenolic glycolipid (mycosid B). The polypeptide is Phenolphthiocerol synthesis polyketide synthase type I Pks15/1 (pks15/1) (Mycobacterium bovis (strain ATCC BAA-935 / AF2122/97)).